A 384-amino-acid chain; its full sequence is GTPase Obg (384 aa).

The region spanning 1–159 (MKFIDEAKIE…RSLQLELKVL (159 aa)) is the Obg domain. Residues 20–46 (ATSFRREKFVPRGGPDGGDGGKGGSVW) are disordered. Positions 33–43 (GPDGGDGGKGG) are enriched in gly residues. Residues 160-348 (ADVGLLGMPN…LVHQINQYLT (189 aa)) enclose the OBG-type G domain. Residues 166–173 (GMPNAGKS), 191–195 (FTTLH), 213–216 (DIPG), 284–287 (NKLD), and 329–331 (SAL) contribute to the GTP site. Serine 173 and threonine 193 together coordinate Mg(2+).

It belongs to the TRAFAC class OBG-HflX-like GTPase superfamily. OBG GTPase family. Monomer. The cofactor is Mg(2+).

It is found in the cytoplasm. Its function is as follows. An essential GTPase which binds GTP, GDP and possibly (p)ppGpp with moderate affinity, with high nucleotide exchange rates and a fairly low GTP hydrolysis rate. Plays a role in control of the cell cycle, stress response, ribosome biogenesis and in those bacteria that undergo differentiation, in morphogenesis control. The polypeptide is GTPase Obg (Neisseria meningitidis serogroup C / serotype 2a (strain ATCC 700532 / DSM 15464 / FAM18)).